A 593-amino-acid chain; its full sequence is Isocitrate dehydrogenase kinase/phosphatase (593 aa).

Residues 315 to 321 (APGIRGM) and Lys-336 contribute to the ATP site. Asp-371 is a catalytic residue.

The protein belongs to the AceK family.

It localises to the cytoplasm. The catalysed reaction is L-seryl-[isocitrate dehydrogenase] + ATP = O-phospho-L-seryl-[isocitrate dehydrogenase] + ADP + H(+). Bifunctional enzyme which can phosphorylate or dephosphorylate isocitrate dehydrogenase (IDH) on a specific serine residue. This is a regulatory mechanism which enables bacteria to bypass the Krebs cycle via the glyoxylate shunt in response to the source of carbon. When bacteria are grown on glucose, IDH is fully active and unphosphorylated, but when grown on acetate or ethanol, the activity of IDH declines drastically concomitant with its phosphorylation. This is Isocitrate dehydrogenase kinase/phosphatase from Salmonella typhi.